Reading from the N-terminus, the 157-residue chain is Endoribonuclease YbeY (157 aa).

Residues H113, H117, and H123 each contribute to the Zn(2+) site.

This sequence belongs to the endoribonuclease YbeY family. Requires Zn(2+) as cofactor.

It localises to the cytoplasm. Functionally, single strand-specific metallo-endoribonuclease involved in late-stage 70S ribosome quality control and in maturation of the 3' terminus of the 16S rRNA. This Ehrlichia ruminantium (strain Welgevonden) protein is Endoribonuclease YbeY.